Consider the following 598-residue polypeptide: Peroxisomal multifunctional enzyme type 2 (598 aa).

The segment at methionine 1 to glycine 309 is (3R)-hydroxyacyl-CoA dehydrogenase. NAD(+)-binding positions include valine 16 to valine 40, leucine 24, aspartate 43, serine 78 to valine 79, and asparagine 102. Residue serine 154 participates in substrate binding. The active-site Proton acceptor is the tyrosine 167. NAD(+) contacts are provided by residues tyrosine 167 to lysine 171 and alanine 199 to arginine 202. An enoyl-CoA hydratase 2 region spans residues glycine 310–leucine 598. (3R)-3-hydroxydecanoyl-CoA-binding positions include histidine 390–glycine 391, lysine 419, aspartate 496–histidine 501, glycine 519, and phenylalanine 549. The 118-residue stretch at proline 469–glycine 586 folds into the MaoC-like domain. The Microbody targeting signal motif lies at alanine 596 to leucine 598.

Belongs to the short-chain dehydrogenases/reductases (SDR) family. Homodimer.

The protein localises to the peroxisome. It catalyses the reaction a (3R)-3-hydroxyacyl-CoA + NAD(+) = a 3-oxoacyl-CoA + NADH + H(+). The catalysed reaction is a (3R)-3-hydroxyacyl-CoA = a (2E)-enoyl-CoA + H2O. The protein operates within lipid metabolism; fatty acid beta-oxidation. In terms of biological role, bifunctional enzyme acting on the peroxisomal beta-oxidation pathway for fatty acids. This chain is Peroxisomal multifunctional enzyme type 2, found in Drosophila melanogaster (Fruit fly).